A 305-amino-acid chain; its full sequence is N-acetylglucosamine-1-phosphotransferase subunit gamma (305 aa).

The first 24 residues, 1-24, serve as a signal peptide directing secretion; sequence MAAGLARLLLLLGLSAGGPAPAGA. Positions 69 to 171 constitute an MRH domain; that stretch reads GKCFSLVEST…TFETPLVCHP (103 aa). Residues C71 and C84 are joined by a disulfide bond. Residues N88 and N115 are each glycosylated (N-linked (GlcNAc...) asparagine). 2 disulfide bridges follow: C129–C157 and C142–C169. In terms of domain architecture, DMAP1-binding spans 176–279; it reads VYPTLPEALQ…YTRPTETSNL (104 aa). The tract at residues 267-305 is disordered; sequence GIPYTRPTETSNLEHLGHETPRAKSPEQLRGDPGLRGSL. Residues 281–296 show a composition bias toward basic and acidic residues; the sequence is HLGHETPRAKSPEQLR.

In terms of assembly, homodimer; disulfide-linked. Hexamer of two alpha (GNPTAB), two beta (GNPTAB) and two gamma (GNPTG) subunits; disulfide-linked. The alpha and/or the beta subunits of the enzyme constitute the catalytic subunits. Post-translationally, cys-245 mediates the formation of the interchain disulfide bond for formation of the homodimer. Cys-142, Cys-157 and Cys-169 are involved in intramolecular disulfide bonds formation. As to expression, widely expressed.

Its subcellular location is the secreted. The protein localises to the golgi apparatus. In terms of biological role, non-catalytic subunit of the N-acetylglucosamine-1-phosphotransferase complex, an enzyme that catalyzes the formation of mannose 6-phosphate (M6P) markers on high mannose type oligosaccharides in the Golgi apparatus. Binds and presents the high mannose glycans of the acceptor to the catalytic alpha and beta subunits (GNPTAB). Enhances the rate of N-acetylglucosamine-1-phosphate transfer to the oligosaccharides of acid hydrolase acceptors. In Homo sapiens (Human), this protein is N-acetylglucosamine-1-phosphotransferase subunit gamma (GNPTG).